The sequence spans 379 residues: Anthranilate O-methyltransferase 3 (379 aa).

Residues 1 to 10 (MPMRIERDLH) show a composition bias toward basic and acidic residues. Positions 1 to 21 (MPMRIERDLHMATGNGETSYT) are disordered. Residue Tyr20 coordinates S-adenosyl-L-homocysteine. Residue Gln27 coordinates anthranilate. 6 residues coordinate S-adenosyl-L-homocysteine: Cys61, Asn66, Asp100, Leu101, Ser143, and Phe144. Anthranilate-binding residues include His164 and Trp165. Mg(2+)-binding residues include Glu265 and Phe267.

It belongs to the methyltransferase superfamily. Type-7 methyltransferase family. SABATH subfamily.

The enzyme catalyses anthranilate + S-adenosyl-L-methionine = O-methyl anthranilate + S-adenosyl-L-homocysteine. It carries out the reaction benzoate + S-adenosyl-L-methionine = methyl benzoate + S-adenosyl-L-homocysteine. It catalyses the reaction salicylate + S-adenosyl-L-methionine = methyl salicylate + S-adenosyl-L-homocysteine. In terms of biological role, methyltransferase involved in the biosynthesis of methyl anthranilate in response to stresses. Utilizes anthranilic acid as substrate. Produces exclusively the O-methyl ester. Can also use benzoic acid as substrate. Low activity with salicylic acid. The chain is Anthranilate O-methyltransferase 3 (AAMT3) from Zea mays (Maize).